Consider the following 309-residue polypeptide: MITFLPIIFSILIVVTFVIGNFANGFIALANSIEWFKRQKISFADQILTALAVSRVGLLWVLLLNWYATELNPAFYSIEVRITAYNLWAVINHFSNWLATSLSIFYLLKIANFSNLIFLCLKRRVKSVVLVILLGPLLFLVCHLFVINMNQIIWTKEYEGNMTWKIKLRSAMYLSNTTVTILANLVPFTLTLISFLLLICSLCKHLEKMQLHGKGSQDPSMKVHIKALQTVTSFLLLCAIYFLSIIMSVWSFESLENKPVFMFCEAITFSYPSTHPFILIWGNKKLKQTFLSVLWHVRYWVKGEKPSXP.

Position 1 (Met1) is a topological domain, extracellular. The helical transmembrane segment at 2–22 (ITFLPIIFSILIVVTFVIGNF) threads the bilayer. Residues 23 to 46 (ANGFIALANSIEWFKRQKISFADQ) lie on the Cytoplasmic side of the membrane. Residues 47-67 (ILTALAVSRVGLLWVLLLNWY) traverse the membrane as a helical segment. At 68-86 (ATELNPAFYSIEVRITAYN) the chain is on the extracellular side. Residues 87–107 (LWAVINHFSNWLATSLSIFYL) traverse the membrane as a helical segment. Residues 108–126 (LKIANFSNLIFLCLKRRVK) lie on the Cytoplasmic side of the membrane. Residues 127 to 147 (SVVLVILLGPLLFLVCHLFVI) form a helical membrane-spanning segment. The Extracellular portion of the chain corresponds to 148–178 (NMNQIIWTKEYEGNMTWKIKLRSAMYLSNTT). N-linked (GlcNAc...) asparagine glycans are attached at residues Asn161 and Asn176. A helical membrane pass occupies residues 179–199 (VTILANLVPFTLTLISFLLLI). Residues 200 to 229 (CSLCKHLEKMQLHGKGSQDPSMKVHIKALQ) lie on the Cytoplasmic side of the membrane. Residues 230–250 (TVTSFLLLCAIYFLSIIMSVW) form a helical membrane-spanning segment. Over 251–259 (SFESLENKP) the chain is Extracellular. The helical transmembrane segment at 260 to 280 (VFMFCEAITFSYPSTHPFILI) threads the bilayer. The Cytoplasmic segment spans residues 281-309 (WGNKKLKQTFLSVLWHVRYWVKGEKPSXP).

Belongs to the G-protein coupled receptor T2R family.

It is found in the membrane. The protein localises to the cell projection. Its subcellular location is the cilium membrane. Functionally, receptor that may play a role in the perception of bitterness and is gustducin-linked. May play a role in sensing the chemical composition of the gastrointestinal content. The activity of this receptor may stimulate alpha gustducin, mediate PLC-beta-2 activation and lead to the gating of TRPM5. In airway epithelial cells, binding of bitter compounds increases the intracellular calcium ion concentration and stimulates ciliary beat frequency. This Pan troglodytes (Chimpanzee) protein is Taste receptor type 2 member 46 (TAS2R46).